A 274-amino-acid polypeptide reads, in one-letter code: Putative phosphoenolpyruvate synthase regulatory protein (274 aa).

157-164 contacts ADP; it reads GVSRCGKT.

The protein belongs to the pyruvate, phosphate/water dikinase regulatory protein family. PSRP subfamily.

The enzyme catalyses [pyruvate, water dikinase] + ADP = [pyruvate, water dikinase]-phosphate + AMP + H(+). It catalyses the reaction [pyruvate, water dikinase]-phosphate + phosphate + H(+) = [pyruvate, water dikinase] + diphosphate. Bifunctional serine/threonine kinase and phosphorylase involved in the regulation of the phosphoenolpyruvate synthase (PEPS) by catalyzing its phosphorylation/dephosphorylation. In Bordetella avium (strain 197N), this protein is Putative phosphoenolpyruvate synthase regulatory protein.